The following is an 862-amino-acid chain: Probable linoleate 9S-lipoxygenase 5 (862 aa).

The region spanning 36–161 is the PLAT domain; it reads NDVNASLLDG…KYKSERIFFA (126 aa). Positions 164–862 constitute a Lipoxygenase domain; it reads AYLPGETPEP…GKGIPNSVSI (699 aa). Residues His523, His528, His714, Asn718, and Ile862 each contribute to the Fe cation site.

Belongs to the lipoxygenase family. In terms of assembly, monomer. Fe cation serves as cofactor. In terms of tissue distribution, not detected in leaves, stems, flowers, roots, tubers and stolons during normal growth and development.

It localises to the cytoplasm. It carries out the reaction (9Z,12Z)-octadecadienoate + O2 = (9S)-hydroperoxy-(10E,12Z)-octadecadienoate. It participates in lipid metabolism; oxylipin biosynthesis. Plant lipoxygenases may be involved in a number of diverse aspects of plant physiology including growth and development, pest resistance, and senescence or responses to wounding. May contribute to cell death during the hypersensitive response (HR) by the massive production of free fatty acid hydroperoxides. Catalyzes the hydroperoxidation of lipids containing a cis,cis-1,4-pentadiene structure. The protein is Probable linoleate 9S-lipoxygenase 5 (LOX1.5) of Solanum tuberosum (Potato).